We begin with the raw amino-acid sequence, 380 residues long: Protein arginine N-methyltransferase PRMT10 (380 aa).

An SAM-dependent MTase PRMT-type domain is found at 26–357 (EVDFANYFCT…KENHRLMDME (332 aa)). Q42, R51, G75, E97, and E126 together coordinate S-adenosyl-L-methionine. Active-site residues include E140 and E149. The tract at residues 187-227 (ENKMEDLEIAMHDWNLFVEDTESYYGVNMNVLTKAYRAEHE) is dimerization arm.

The protein belongs to the class I-like SAM-binding methyltransferase superfamily. Protein arginine N-methyltransferase family. As to quaternary structure, ring-like homodimer.

It catalyses the reaction L-arginyl-[protein] + 2 S-adenosyl-L-methionine = N(omega),N(omega)-dimethyl-L-arginyl-[protein] + 2 S-adenosyl-L-homocysteine + 2 H(+). Methylates (mono and asymmetric dimethylation) the guanidino nitrogens of arginyl residues in some proteins. The sequence is that of Protein arginine N-methyltransferase PRMT10 (PRMT10) from Oryza sativa subsp. japonica (Rice).